Here is a 100-residue protein sequence, read N- to C-terminus: Small ribosomal subunit protein uS14c (100 aa).

It belongs to the universal ribosomal protein uS14 family. Part of the 30S ribosomal subunit.

It is found in the plastid. It localises to the chloroplast. Functionally, binds 16S rRNA, required for the assembly of 30S particles. The sequence is that of Small ribosomal subunit protein uS14c from Draba nemorosa (Woodland whitlowgrass).